Reading from the N-terminus, the 519-residue chain is General transcription factor 3C polypeptide 5 (519 aa).

Ala-2 bears the N-acetylalanine mark. The tract at residues 465–519 (ALFSSSAKADGGKEQLTYESGEDEEDEEEEEEEEEDFKPSDGSENEMETEILDYV) is disordered. Composition is skewed to acidic residues over residues 484–500 (SGED…EEED) and 507–519 (SENE…LDYV).

Belongs to the TFIIIC subunit 5 family. In terms of assembly, part of the TFIIIC subcomplex TFIIIC2, consisting of six subunits, GTF3C1, GTF3C2, GTF3C3, GTF3C4, GTF3C5 and GTF3C6. Interacts with BRF1, GTF3C6 and TBP.

The protein resides in the nucleus. In terms of biological role, involved in RNA polymerase III-mediated transcription. Integral, tightly associated component of the DNA-binding TFIIIC2 subcomplex that directly binds tRNA and virus-associated RNA promoters. This is General transcription factor 3C polypeptide 5 (GTF3C5) from Homo sapiens (Human).